We begin with the raw amino-acid sequence, 222 residues long: (4-{4-[2-(gamma-L-glutamylamino)ethyl]phenoxymethyl}furan-2-yl)methanamine synthase (222 aa).

This sequence belongs to the MfnF family.

The catalysed reaction is gamma-L-glutamyltyramine + [5-(aminomethyl)furan-3-yl]methyl diphosphate = (4-{4-[2-(gamma-L-glutamylamino)ethyl]phenoxymethyl}furan-2-yl)methanamine + diphosphate. It functions in the pathway cofactor biosynthesis; methanofuran biosynthesis. Functionally, catalyzes the condensation between 5-(aminomethyl)-3-furanmethanol diphosphate (F1-PP) and gamma-glutamyltyramine to produce APMF-Glu. The chain is (4-{4-[2-(gamma-L-glutamylamino)ethyl]phenoxymethyl}furan-2-yl)methanamine synthase from Methanococcus vannielii.